Consider the following 698-residue polypeptide: Elongation factor G (698 aa).

One can recognise a tr-type G domain in the interval glutamate 8–valine 290. GTP contacts are provided by residues alanine 17–threonine 24, aspartate 88–histidine 92, and asparagine 142–aspartate 145.

Belongs to the TRAFAC class translation factor GTPase superfamily. Classic translation factor GTPase family. EF-G/EF-2 subfamily.

It localises to the cytoplasm. In terms of biological role, catalyzes the GTP-dependent ribosomal translocation step during translation elongation. During this step, the ribosome changes from the pre-translocational (PRE) to the post-translocational (POST) state as the newly formed A-site-bound peptidyl-tRNA and P-site-bound deacylated tRNA move to the P and E sites, respectively. Catalyzes the coordinated movement of the two tRNA molecules, the mRNA and conformational changes in the ribosome. The chain is Elongation factor G from Azoarcus sp. (strain BH72).